A 282-amino-acid polypeptide reads, in one-letter code: MKRVGAHVSASGGVEQAPLNATAIGAKAFALFTKNQRQWKAPKLSKATIEAFQKACADGGFQPQHILPHDSYLINLGSPDPEKLERARSAFIDEMQRVADLGLQLLNFHPGSHLKEISEEASLLLIAESINMALEATNGVTAVIENTAGQGTNLGYRFEQIAFLIDRIEDKSRVGVCLDTCHLFASGYDLSSTEAIETTFNEFDSTVGLHYLRGMHLNDAMQPLGSRVDRHASLGKGTIGMAAFTFIMNHPACEEIPLILETPNPDIWSEEIALLYSLQQVD.

Positions 69, 109, 145, 179, 182, 216, 229, 231, and 261 each coordinate Zn(2+).

The protein belongs to the AP endonuclease 2 family. Zn(2+) is required as a cofactor.

The enzyme catalyses Endonucleolytic cleavage to 5'-phosphooligonucleotide end-products.. Functionally, endonuclease IV plays a role in DNA repair. It cleaves phosphodiester bonds at apurinic or apyrimidinic (AP) sites, generating a 3'-hydroxyl group and a 5'-terminal sugar phosphate. This is Probable endonuclease 4 from Chlorobium chlorochromatii (strain CaD3).